We begin with the raw amino-acid sequence, 212 residues long: uncharacterized protein (212 aa).

This is an uncharacterized protein from Aquifex aeolicus (strain VF5).